The following is a 197-amino-acid chain: Cell division protein SepF (197 aa).

Residues 15-91 are disordered; it reads DEEEVESPEE…PPSKSNGKNV (77 aa). Basic and acidic residues predominate over residues 22-31; it reads PEERQRRVVQ. Residues 37–47 show a composition bias toward low complexity; the sequence is TNNVQQNQPQQ. 2 stretches are compositionally biased toward polar residues: residues 48 to 58 and 78 to 91; these read SERSYSNQSKL and RMNQ…GKNV.

This sequence belongs to the SepF family. Homodimer. Interacts with FtsZ.

Its subcellular location is the cytoplasm. Cell division protein that is part of the divisome complex and is recruited early to the Z-ring. Probably stimulates Z-ring formation, perhaps through the cross-linking of FtsZ protofilaments. Its function overlaps with FtsA. This is Cell division protein SepF from Staphylococcus haemolyticus (strain JCSC1435).